A 258-amino-acid chain; its full sequence is Phosphoribosylaminoimidazole-succinocarboxamide synthase (258 aa).

Belongs to the SAICAR synthetase family.

It carries out the reaction 5-amino-1-(5-phospho-D-ribosyl)imidazole-4-carboxylate + L-aspartate + ATP = (2S)-2-[5-amino-1-(5-phospho-beta-D-ribosyl)imidazole-4-carboxamido]succinate + ADP + phosphate + 2 H(+). The protein operates within purine metabolism; IMP biosynthesis via de novo pathway; 5-amino-1-(5-phospho-D-ribosyl)imidazole-4-carboxamide from 5-amino-1-(5-phospho-D-ribosyl)imidazole-4-carboxylate: step 1/2. The chain is Phosphoribosylaminoimidazole-succinocarboxamide synthase from Maricaulis maris (strain MCS10) (Caulobacter maris).